The chain runs to 86 residues: Putative membrane protein insertion efficiency factor (86 aa).

This sequence belongs to the UPF0161 family.

It is found in the cell inner membrane. Could be involved in insertion of integral membrane proteins into the membrane. The polypeptide is Putative membrane protein insertion efficiency factor (Cellvibrio japonicus (strain Ueda107) (Pseudomonas fluorescens subsp. cellulosa)).